Here is a 377-residue protein sequence, read N- to C-terminus: F-box protein At1g11810 (377 aa).

The 47-residue stretch at 2–48 (TTTMSTLPVVLVDEILARVPITSLRSLRSTCKKWEASSKTNLVGGKA) folds into the F-box domain.

This chain is F-box protein At1g11810, found in Arabidopsis thaliana (Mouse-ear cress).